A 181-amino-acid chain; its full sequence is Inner membrane-spanning protein YciB (181 aa).

Transmembrane regions (helical) follow at residues 10–30 (LIIF…GALI), 50–70 (MQLI…ALHD), 80–100 (IVYV…KPAI), 120–140 (WAWV…AYHL), and 148–168 (FKVF…GGYI).

Belongs to the YciB family.

It is found in the cell inner membrane. Plays a role in cell envelope biogenesis, maintenance of cell envelope integrity and membrane homeostasis. The sequence is that of Inner membrane-spanning protein YciB from Vibrio cholerae serotype O1 (strain ATCC 39541 / Classical Ogawa 395 / O395).